A 278-amino-acid chain; its full sequence is Small ribosomal subunit protein uS3 (278 aa).

Positions 39–107 constitute a KH type-2 domain; sequence LRKAISKKYV…KVQLNIVEIS (69 aa). Positions 255–278 are disordered; the sequence is AEIPAEEKPKRVVKKAENITKEEE.

It belongs to the universal ribosomal protein uS3 family. In terms of assembly, part of the 30S ribosomal subunit. Forms a tight complex with proteins S10 and S14.

Its function is as follows. Binds the lower part of the 30S subunit head. Binds mRNA in the 70S ribosome, positioning it for translation. This is Small ribosomal subunit protein uS3 from Dehalococcoides mccartyi (strain CBDB1).